The following is a 480-amino-acid chain: Uridine/deoxyuridine transporter (480 aa).

A run of 14 helical transmembrane segments spans residues 14–34 (VGSIVALMVALLVAIFAFQLN), 55–75 (SIALTQTIFFTAAALFALFLP), 93–113 (LTMIGCLISGFATNVGILMIG), 115–135 (ILQGAAGPVVPLCLIILHVKV), 147–167 (ILTSINGGIAGVDALAGGWLV), 174–194 (SVFFVMGITAALAILLVSFGT), 207–227 (WTGVILLVVAMGALLSAVNAL), 239–259 (WLLASILALLGLICFVGFWQV), 280–300 (GLLITTLLTMTGVFAIMNGII), 320–340 (LVTLTPYALAGLFFGPVSGFL), 358–378 (IIGIVLAVAGVLQPSIWLLLL), 382–402 (FIGITYAGITNIMLNGLGIVL), 417–437 (GMFNLGAGLSFIILYAVPTVL), and 449–469 (ISGIVTGLILVIIAFFTSFLI).

This sequence belongs to the major facilitator superfamily. EmrB family.

It is found in the cell membrane. Its function is as follows. Responsible for the uptake of uridine and deoxyuridine. Not involved in purine nucleoside uptake. The sequence is that of Uridine/deoxyuridine transporter from Lactococcus lactis subsp. cremoris (strain MG1363).